Consider the following 741-residue polypeptide: uncharacterized protein (741 aa).

The first 22 residues, 1–22, serve as a signal peptide directing secretion; it reads MKSVKIIIILALALLIQISHIA.

This is an uncharacterized protein from Archaeoglobus fulgidus (strain ATCC 49558 / DSM 4304 / JCM 9628 / NBRC 100126 / VC-16).